We begin with the raw amino-acid sequence, 525 residues long: GMP synthase [glutamine-hydrolyzing] (525 aa).

One can recognise a Glutamine amidotransferase type-1 domain in the interval 9–207 (RILILDFGSQ…VQDICGCEAL (199 aa)). C86 functions as the Nucleophile in the catalytic mechanism. Catalysis depends on residues H181 and E183. The region spanning 208-400 (WTPSNIVEDA…LGLPYDMVYR (193 aa)) is the GMPS ATP-PPase domain. Position 235 to 241 (235 to 241 (SGGVDSS)) interacts with ATP.

Homodimer.

It catalyses the reaction XMP + L-glutamine + ATP + H2O = GMP + L-glutamate + AMP + diphosphate + 2 H(+). The protein operates within purine metabolism; GMP biosynthesis; GMP from XMP (L-Gln route): step 1/1. Functionally, catalyzes the synthesis of GMP from XMP. This chain is GMP synthase [glutamine-hydrolyzing], found in Pseudomonas putida (strain W619).